The following is a 187-amino-acid chain: Large ribosomal subunit protein uL6 (187 aa).

This sequence belongs to the universal ribosomal protein uL6 family. As to quaternary structure, part of the 50S ribosomal subunit.

Its function is as follows. This protein binds to the 23S rRNA, and is important in its secondary structure. It is located near the subunit interface in the base of the L7/L12 stalk, and near the tRNA binding site of the peptidyltransferase center. This is Large ribosomal subunit protein uL6 from Chloroflexus aggregans (strain MD-66 / DSM 9485).